The sequence spans 182 residues: Endoribonuclease YbeY (182 aa).

Residues His-120, His-124, and His-130 each coordinate Zn(2+). The segment at 157–182 is disordered; that stretch reads RGVSFAPKPTGAGAFPSAADRDDTQN.

The protein belongs to the endoribonuclease YbeY family. The cofactor is Zn(2+).

Its subcellular location is the cytoplasm. In terms of biological role, single strand-specific metallo-endoribonuclease involved in late-stage 70S ribosome quality control and in maturation of the 3' terminus of the 16S rRNA. The protein is Endoribonuclease YbeY of Corynebacterium jeikeium (strain K411).